The following is a 506-amino-acid chain: Light-independent protochlorophyllide reductase subunit B (506 aa).

Residue Asp36 coordinates [4Fe-4S] cluster. Asp279 acts as the Proton donor in catalysis. 414-415 (GL) is a substrate binding site.

Belongs to the ChlB/BchB/BchZ family. In terms of assembly, protochlorophyllide reductase is composed of three subunits; BchL, BchN and BchB. Forms a heterotetramer of two BchB and two BchN subunits. The cofactor is [4Fe-4S] cluster.

It carries out the reaction chlorophyllide a + oxidized 2[4Fe-4S]-[ferredoxin] + 2 ADP + 2 phosphate = protochlorophyllide a + reduced 2[4Fe-4S]-[ferredoxin] + 2 ATP + 2 H2O. It functions in the pathway porphyrin-containing compound metabolism; bacteriochlorophyll biosynthesis (light-independent). In terms of biological role, component of the dark-operative protochlorophyllide reductase (DPOR) that uses Mg-ATP and reduced ferredoxin to reduce ring D of protochlorophyllide (Pchlide) to form chlorophyllide a (Chlide). This reaction is light-independent. The NB-protein (BchN-BchB) is the catalytic component of the complex. This Methylobacterium sp. (strain 4-46) protein is Light-independent protochlorophyllide reductase subunit B.